The sequence spans 347 residues: N-acetyl-gamma-glutamyl-phosphate reductase (347 aa).

The active site involves cysteine 155.

This sequence belongs to the NAGSA dehydrogenase family. Type 1 subfamily.

The protein localises to the cytoplasm. It catalyses the reaction N-acetyl-L-glutamate 5-semialdehyde + phosphate + NADP(+) = N-acetyl-L-glutamyl 5-phosphate + NADPH + H(+). It functions in the pathway amino-acid biosynthesis; L-arginine biosynthesis; N(2)-acetyl-L-ornithine from L-glutamate: step 3/4. Catalyzes the NADPH-dependent reduction of N-acetyl-5-glutamyl phosphate to yield N-acetyl-L-glutamate 5-semialdehyde. In Akkermansia muciniphila (strain ATCC BAA-835 / DSM 22959 / JCM 33894 / BCRC 81048 / CCUG 64013 / CIP 107961 / Muc), this protein is N-acetyl-gamma-glutamyl-phosphate reductase.